We begin with the raw amino-acid sequence, 784 residues long: N-alpha-acetyltransferase 35, NatC auxiliary subunit homolog (784 aa).

3 disordered regions span residues 1–23 (MYPSTLPAEADPSTMNGSSVAEP), 320–353 (NTLDRGTQPEKGSDAPNPMGFSPRIHDRSQPPAF), and 606–630 (SKTQSGGSGAAKNRKAAKPKKNKKT). Residues 617-630 (KNRKAAKPKKNKKT) are compositionally biased toward basic residues.

This sequence belongs to the MAK10 family. Component of the N-terminal acetyltransferase C (NatC) complex, which is composed of Naa35, Sbat/Naa38 and Naa30A.

Its subcellular location is the cytoplasm. Auxillary component of the N-terminal acetyltransferase C (NatC) complex which catalyzes acetylation of N-terminal methionine residues. This chain is N-alpha-acetyltransferase 35, NatC auxiliary subunit homolog, found in Drosophila melanogaster (Fruit fly).